The primary structure comprises 580 residues: PX domain-containing protein kinase-like protein (580 aa).

The PX domain maps to 14–126 (LDDTVPLTAA…KFLDPNNYSA (113 aa)). Positions 88–481 (FIAERQKGLQ…VENSEEQPVK (394 aa)) constitute a Protein kinase domain. The interval 433–551 (EQKQIHQHRR…LPQAVNGVNR (119 aa)) is disordered. Composition is skewed to basic residues over residues 437–448 (IHQHRRLTRAQS) and 457–469 (KRRKILARKKSKR). The span at 483-514 (SNANNSAGSGASSPLTSPSSPTPPSTAGLSSA) shows a compositional bias: low complexity. A compositionally biased stretch (pro residues) spans 515–531 (LPPPPPPPPPPPPPAGP). The 20-residue stretch at 549 to 568 (VNRGALLSSIQNFQKGTLRK) folds into the WH2 domain.

It belongs to the protein kinase superfamily.

The protein resides in the cytoplasm. It is found in the cell membrane. Binds to and modulates brain Na,K-ATPase subunits ATP1B1 and ATP1B3 and may thereby participate in the regulation of electrical excitability and synaptic transmission. May not display kinase activity. The chain is PX domain-containing protein kinase-like protein from Rattus norvegicus (Rat).